The sequence spans 615 residues: Matrix metalloproteinase-25 (615 aa).

Positions 1–162 (MCFPGSQISP…AAGLVRRRRR (162 aa)) are excised as a propeptide. Residues 53 to 73 (ILRLPAFGLPLLALLLVPLLP) form a helical membrane-spanning segment. The Cysteine switch signature appears at 143–150 (PRCSLPDV). 2 residues coordinate Zn(2+): cysteine 145 and histidine 287. Glutamate 288 is an active-site residue. 2 residues coordinate Zn(2+): histidine 291 and histidine 297. Residues 336–366 (VSQNPNARPTRKPLVPPPQPPAMPPDSPATP) form a disordered region. A compositionally biased stretch (pro residues) spans 349–366 (LVPPPQPPAMPPDSPATP). Hemopexin repeat units follow at residues 368-417 (PDRC…WEGL), 421-466 (VKVI…GLPP), 467-515 (GEDV…DGAP), and 516-562 (FAPD…WLDC). Cysteine 371 and cysteine 562 are joined by a disulfide. Residues 547–582 (AESDSPQPIGPKWLDCPAPNSDPRVTSPPKTTSKTR) form a disordered region. The GPI-anchor amidated alanine moiety is linked to residue alanine 593. Positions 594-615 (SEQLSPLLLPLLPLVAGEVFSY) are cleaved as a propeptide — removed in mature form.

The protein belongs to the peptidase M10A family. Zn(2+) is required as a cofactor. Ca(2+) serves as cofactor. Post-translationally, the precursor is cleaved by a furin endopeptidase.

The protein resides in the cell membrane. Its function is as follows. May activate progelatinase A. The polypeptide is Matrix metalloproteinase-25 (Mmp25) (Mus musculus (Mouse)).